A 113-amino-acid chain; its full sequence is Iron-sulfur cluster insertion protein ErpA (113 aa).

Residues C41, C105, and C107 each coordinate iron-sulfur cluster.

It belongs to the HesB/IscA family. In terms of assembly, homodimer. The cofactor is iron-sulfur cluster.

Functionally, required for insertion of 4Fe-4S clusters for at least IspG. The protein is Iron-sulfur cluster insertion protein ErpA of Histophilus somni (strain 2336) (Haemophilus somnus).